The chain runs to 182 residues: Probable RNA 2'-phosphotransferase (182 aa).

The protein belongs to the KptA/TPT1 family.

In terms of biological role, removes the 2'-phosphate from RNA via an intermediate in which the phosphate is ADP-ribosylated by NAD followed by a presumed transesterification to release the RNA and generate ADP-ribose 1''-2''-cyclic phosphate (APPR&gt;P). May function as an ADP-ribosylase. In Pseudomonas paraeruginosa (strain DSM 24068 / PA7) (Pseudomonas aeruginosa (strain PA7)), this protein is Probable RNA 2'-phosphotransferase.